The sequence spans 414 residues: Tetraspanning orphan receptor (414 aa).

Topologically, residues 1-28 (MPRASALLTSDPRHQFTCCLCLHVRTGT) are cytoplasmic. The helical transmembrane segment at 29–49 (IIFGITQIIIQLIFISFLFLM) threads the bilayer. The Extracellular portion of the chain corresponds to 50-166 (TFNPRLFPED…EIKIRQFSPY (117 aa)). The helical transmembrane segment at 167 to 187 (IAVCVTTFSLAFCCFMVHGAI) threads the bilayer. Residues 188–194 (TRQPTHL) lie on the Cytoplasmic side of the membrane. The chain crosses the membrane as a helical span at residues 195 to 215 (LPFFFIQVFDLIICLIHILGF). At 216 to 241 (MSSTSDIRLMIHTKTGPIYIKSTGLA) the chain is on the extracellular side. A helical transmembrane segment spans residues 242-262 (FIILSISCMMLAFKAYCLGMV). Topologically, residues 263–414 (WDCYKYLMLN…TSTPSNVHPC (152 aa)) are cytoplasmic. The disordered stretch occupies residues 306–328 (LTGNLDSANESNTRAHPDPVTYD).

Interacts (via N-terminal extracellular domain) with human C2a. In terms of processing, phosphorylated on tyrosine residues.

It localises to the cell membrane. Cell surface receptor that binds to human complement C2a protein. This results in inhibition of the classical and lectin pathways of complement activation, probably due to interference with binding of C2a to C4b and interference with cleavage by C1 or MASP2 such that C3 convertase cannot be formed. This infers resistance to complement-mediated cell lysis, allowing parasite survival and infection. In Schistosoma japonicum (Blood fluke), this protein is Tetraspanning orphan receptor.